The primary structure comprises 212 residues: Thymidylate kinase (212 aa).

10–17 serves as a coordination point for ATP; it reads GPEGAGKT.

Belongs to the thymidylate kinase family.

It catalyses the reaction dTMP + ATP = dTDP + ADP. Functionally, phosphorylation of dTMP to form dTDP in both de novo and salvage pathways of dTTP synthesis. In Bacillus velezensis (strain DSM 23117 / BGSC 10A6 / LMG 26770 / FZB42) (Bacillus amyloliquefaciens subsp. plantarum), this protein is Thymidylate kinase.